Here is a 487-residue protein sequence, read N- to C-terminus: Protein DETOXIFICATION 11 (487 aa).

The next 12 helical transmembrane spans lie at 35 to 55 (LICFAAPMAAVVITQSMLQII), 73 to 93 (FAISFCNVTGFSFIMGLSCAL), 122 to 142 (LVCLPLSLLWFNMGKLLVILG), 151 to 171 (AGRFAAWLIPGLFAYAVLQPL), 184 to 204 (LLITSCVVFCLHVPLCWLLVY), 211 to 231 (IGGALALSLSYWLYAIFLGSF), 264 to 284 (AAMLCLEWWSYELIILLSGLL), 293 to 313 (VLSVCLQTLSMTYSIPLAIAA), 330 to 350 (AAHIVVYAAMSLAVVDALMVG), 377 to 397 (MAPLVSISLILDSLQGVLSGV), 412 to 432 (FGAFYLWGIPIAASLAFWVHL), and 435 to 455 (VGLWIGIIAGAVLQTLLLALV).

It belongs to the multi antimicrobial extrusion (MATE) (TC 2.A.66.1) family.

Its subcellular location is the membrane. This chain is Protein DETOXIFICATION 11, found in Arabidopsis thaliana (Mouse-ear cress).